A 492-amino-acid polypeptide reads, in one-letter code: Membrane-bound lytic murein transglycosylase F (492 aa).

The signal sequence occupies residues 1–18 (MKGLFLRIIAIVALLLWA). Positions 19-268 (IDMVFPWQQI…RIEEKYFNHL (250 aa)) are non-LT domain. The segment at 270–492 (QFDYVDTRSY…DTLATTVTTQ (223 aa)) is LT domain. Residue Glu-313 is part of the active site.

It in the N-terminal section; belongs to the bacterial solute-binding protein 3 family. In the C-terminal section; belongs to the transglycosylase Slt family.

Its subcellular location is the cell outer membrane. The catalysed reaction is Exolytic cleavage of the (1-&gt;4)-beta-glycosidic linkage between N-acetylmuramic acid (MurNAc) and N-acetylglucosamine (GlcNAc) residues in peptidoglycan, from either the reducing or the non-reducing ends of the peptidoglycan chains, with concomitant formation of a 1,6-anhydrobond in the MurNAc residue.. Its function is as follows. Murein-degrading enzyme that degrades murein glycan strands and insoluble, high-molecular weight murein sacculi, with the concomitant formation of a 1,6-anhydromuramoyl product. Lytic transglycosylases (LTs) play an integral role in the metabolism of the peptidoglycan (PG) sacculus. Their lytic action creates space within the PG sacculus to allow for its expansion as well as for the insertion of various structures such as secretion systems and flagella. This is Membrane-bound lytic murein transglycosylase F from Pasteurella multocida (strain Pm70).